A 72-amino-acid chain; its full sequence is Translation initiation factor IF-1 (72 aa).

The S1-like domain maps to 1 to 72 (MAKEESIKMN…SKGRITYRAR (72 aa)).

It belongs to the IF-1 family. In terms of assembly, component of the 30S ribosomal translation pre-initiation complex which assembles on the 30S ribosome in the order IF-2 and IF-3, IF-1 and N-formylmethionyl-tRNA(fMet); mRNA recruitment can occur at any time during PIC assembly.

The protein localises to the cytoplasm. In terms of biological role, one of the essential components for the initiation of protein synthesis. Stabilizes the binding of IF-2 and IF-3 on the 30S subunit to which N-formylmethionyl-tRNA(fMet) subsequently binds. Helps modulate mRNA selection, yielding the 30S pre-initiation complex (PIC). Upon addition of the 50S ribosomal subunit IF-1, IF-2 and IF-3 are released leaving the mature 70S translation initiation complex. The protein is Translation initiation factor IF-1 of Alkalilimnicola ehrlichii (strain ATCC BAA-1101 / DSM 17681 / MLHE-1).